The chain runs to 1014 residues: MFWIVLIVILLLALAGLFFVRAQSEREWMREVSAWQEKKGEKQAELPEIKDGMPDFPELALMLFHAVKTAVYWLFVGVVRFCRNYLAHESEPDRPVPPASANRADVPTASDGYSDSGNGTEEAETEEAEAAEEEAADTEDIATAVIDNRRIPFDRSIAEGLMPSESEISPVRPVFKEITLEEATRALNSAALRETKKRYIDAFEKNETAVPKVRVSDTPMEGLQIIGLDDPVLQRTYSRMFDADKEAFSESADYGFEPYFEKQHPSAFSAVKAENARNAPFRRHAGQGKGQAEAKSPDVSQGQSVSDGTAVRDARRRVSVNLKEPNKATVSAEARISRLIPESRTVVGKRDVEMPSETENVFTETVSSVGYGGPVYDETADIHIEEPAAPDAWVVEPPEVPKVPMPAIDIPPPPPVSEIYNRTYEPPAGFEQVQRSRIAETDHLADDVLNGGWQEETAAIANDGSEGVAERSSGQYLSETEAFGHDSQAVCPFENVPSERPSRRASDTEADEGAFQSEETGAVSEHLPTTDLLLPPLFNPGATQTEEELLENSITIEEKLAEFKVKVKVVDSYSGPVITRYEIEPDVGVRGNSVLNLEKDLARSLGVASIRVVETILGKTCMGLELPNPKRQMIRLSEIFNSPEFAESKSKLTLALGQDITGQPVVTDLGKAPHLLVAGTTGSGKSVGVNAMILSMLFKAAPEDVRMIMIDPKMLELSIYEGIPHLLAPVVTDMKLAANALNWCVNEMEKRYRLMSFMGVRNLAGFNQKIAEAAARGEKIGNPFSLTPDNPEPLEKLPFIVVVVDEFADLMMTAGKKIEELIARLAQKARAAGIHLILATQRPSVDVITGLIKANIPTRIAFQVSSKIDSRTILDQMGAENLLGQGDMLFLPPGTAYPQRVHGAFASDEEVHRVVEYLKQFGEPDYVDDILSGGMSDDLLGISRSGDGETDPMYDEAVSVVLKTRKASISGVQRALRIGYNRAARLIDQMEAEGIVSAPEHNGNRTILVPLDNA.

The helical transmembrane segment at 1–21 (MFWIVLIVILLLALAGLFFVR) threads the bilayer. Disordered stretches follow at residues 89 to 142 (ESEP…EDIA), 283 to 318 (RHAGQGKGQAEAKSPDVSQGQSVSDGTAVRDARRRV), and 487 to 525 (SQAVCPFENVPSERPSRRASDTEADEGAFQSEETGAVSE). The segment covering 121–140 (EEAETEEAEAAEEEAADTED) has biased composition (acidic residues). The span at 298–307 (DVSQGQSVSD) shows a compositional bias: polar residues. A FtsK domain is found at 662-871 (GQPVVTDLGK…FQVSSKIDSR (210 aa)). Residue 682-687 (GSGKSV) coordinates ATP.

It belongs to the FtsK/SpoIIIE/SftA family. Homohexamer. Forms a ring that surrounds DNA.

It is found in the cell inner membrane. Functionally, essential cell division protein that coordinates cell division and chromosome segregation. The N-terminus is involved in assembly of the cell-division machinery. The C-terminus functions as a DNA motor that moves dsDNA in an ATP-dependent manner towards the dif recombination site, which is located within the replication terminus region. Translocation stops specifically at Xer-dif sites, where FtsK interacts with the Xer recombinase, allowing activation of chromosome unlinking by recombination. FtsK orienting polar sequences (KOPS) guide the direction of DNA translocation. FtsK can remove proteins from DNA as it translocates, but translocation stops specifically at XerCD-dif site, thereby preventing removal of XerC and XerD from dif. This is DNA translocase FtsK 2 (ftsK2) from Neisseria meningitidis serogroup A / serotype 4A (strain DSM 15465 / Z2491).